A 426-amino-acid polypeptide reads, in one-letter code: Kelch repeat-containing protein At3g27220 (426 aa).

The helical transmembrane segment at 18 to 38 threads the bilayer; it reads LMLVLYFTSVLGIGFIAAFLC. Kelch repeat units follow at residues 123–170, 173–222, 224–275, 276–338, and 341–394; these read LLYV…IVTD, YVYV…IWRG, LHVM…VAND, KLLV…WIIV, and SIVI…FWNG.

The protein resides in the membrane. The chain is Kelch repeat-containing protein At3g27220 from Arabidopsis thaliana (Mouse-ear cress).